We begin with the raw amino-acid sequence, 747 residues long: Beta-glucosidase BoGH3A (747 aa).

Positions 1–26 are cleaved as a signal peptide; it reads MIIGIMKTFLLTICFLSVQTGMVAIA. Residue Asp273 is part of the active site.

Belongs to the glycosyl hydrolase 3 family.

It localises to the periplasm. The catalysed reaction is Hydrolysis of terminal, non-reducing beta-D-glucosyl residues with release of beta-D-glucose.. It functions in the pathway glucan metabolism; xyloglucan degradation. Its function is as follows. Catalyzes the hydrolysis of terminal, non-reducing beta-D-glucosyl residues with release of beta-D-glucose in xyloglucan degradation, leading to remove the backbone 'G' units. The sequence is that of Beta-glucosidase BoGH3A from Bacteroides ovatus (strain ATCC 8483 / DSM 1896 / JCM 5824 / BCRC 10623 / CCUG 4943 / NCTC 11153).